The following is a 372-amino-acid chain: 4-hydroxy-3-methylbut-2-en-1-yl diphosphate synthase (flavodoxin) (372 aa).

Residues Cys-270, Cys-273, Cys-305, and Glu-312 each contribute to the [4Fe-4S] cluster site.

It belongs to the IspG family. [4Fe-4S] cluster is required as a cofactor.

The catalysed reaction is (2E)-4-hydroxy-3-methylbut-2-enyl diphosphate + oxidized [flavodoxin] + H2O + 2 H(+) = 2-C-methyl-D-erythritol 2,4-cyclic diphosphate + reduced [flavodoxin]. Its pathway is isoprenoid biosynthesis; isopentenyl diphosphate biosynthesis via DXP pathway; isopentenyl diphosphate from 1-deoxy-D-xylulose 5-phosphate: step 5/6. Converts 2C-methyl-D-erythritol 2,4-cyclodiphosphate (ME-2,4cPP) into 1-hydroxy-2-methyl-2-(E)-butenyl 4-diphosphate. The polypeptide is 4-hydroxy-3-methylbut-2-en-1-yl diphosphate synthase (flavodoxin) (Shigella boydii serotype 18 (strain CDC 3083-94 / BS512)).